Consider the following 344-residue polypeptide: Mitochondrial mRNA pseudouridine synthase RPUSD3 (344 aa).

A mitochondrion-targeting transit peptide spans 1-41 (MGGWRVLGQASGGWRRGLGIRATSTAAGFGTKARHQLQRRG). The segment at 29 to 59 (FGTKARHQLQRRGASKPSDPPGDQPFPGLLR) is disordered. Over residues 32–42 (KARHQLQRRGA) the composition is skewed to basic residues. S64 carries the phosphoserine modification.

This sequence belongs to the pseudouridine synthase RluA family. As to quaternary structure, forms a regulatory protein-RNA complex, consisting of RCC1L, NGRN, RPUSD3, RPUSD4, TRUB2, FASTKD2 and 16S mt-rRNA.

It localises to the mitochondrion matrix. The catalysed reaction is a uridine in mRNA = a pseudouridine in mRNA. In terms of biological role, catalyzes uridine to pseudouridine isomerization (pseudouridylation) of specific mitochondrial mRNAs (mt-mRNAs), a post-transcriptional modification necessary for their translation. Acts at position 390 in COXI mt-mRNA and at position 697-699 in mitochondrial COXIII mt-mRNA. As a component of a functional protein-RNA module, consisting of RCC1L, NGRN, RPUSD3, RPUSD4, TRUB2, FASTKD2 and 16S mitochondrial ribosomal RNA (16S mt-rRNA), controls 16S mt-rRNA abundance and may play a role in mitochondrial ribosome biogenesis. The polypeptide is Mitochondrial mRNA pseudouridine synthase RPUSD3 (RPUSD3) (Bos taurus (Bovine)).